A 3750-amino-acid polypeptide reads, in one-letter code: Cubilin homolog (3750 aa).

Residues 1 to 28 (MEGAARSRLLLCWTLLAIITDTWPIAEG) form the signal peptide. 2 N-linked (GlcNAc...) asparagine glycosylation sites follow: asparagine 51 and asparagine 123. The 37-residue stretch at 154-190 (EANSCASGPCENGGTCYNTYTGFRCQCRSAFEGTKCE) folds into the EGF-like 1 domain. Cystine bridges form between cysteine 158–cysteine 169, cysteine 163–cysteine 178, cysteine 180–cysteine 189, cysteine 196–cysteine 212, cysteine 206–cysteine 221, and cysteine 223–cysteine 232. Positions 192–233 (DVNECALYEGTDLGCQNGGQCQNHFGTYSCLCQPGWHGMHCT) constitute an EGF-like 2; calcium-binding domain. Positions 282-308 (DVDECSDSAAHKPCSTSCINLPGSFTC) constitute an EGF-like 3; calcium-binding domain. The 29-residue stretch at 324 to 352 (DLDECQTNNGGCSLSPKVDCINTYGSYHC) folds into the EGF-like 4; calcium-binding domain. Asparagine 424 carries an N-linked (GlcNAc...) asparagine glycan. 2 consecutive EGF-like domains span residues 426–463 (TTTN…PICE) and 465–503 (QPSP…RLCE). Intrachain disulfides connect cysteine 430-cysteine 441, cysteine 435-cysteine 451, cysteine 453-cysteine 462, cysteine 469-cysteine 480, cysteine 474-cysteine 491, cysteine 493-cysteine 502, and cysteine 509-cysteine 535. Asparagine 448 is a glycosylation site (N-linked (GlcNAc...) asparagine). 13 CUB domains span residues 509–623 (CNGM…WNSM), 627–738 (CGGR…YSVE), 744–852 (CGGV…YRMA), 853–971 (CDYK…YRAL), 978–1095 (CGGV…YTFE), 1100–1212 (CGGH…WRIF), 1216–1331 (CGGS…YKAN), 1332–1434 (CIRN…QLDY), 1439–1550 (CMEE…YRTV), 1554–1670 (CGGK…FHES), 1671–1788 (CGQT…YMTM), 1792–1902 (CGSI…YNYE), and 1903–2001 (HHNE…WNRL). Residues asparagine 542 and asparagine 548 are each glycosylated (N-linked (GlcNAc...) asparagine). Cysteine 562 and cysteine 584 are disulfide-bonded. Asparagine 609 is a glycosylation site (N-linked (GlcNAc...) asparagine). Intrachain disulfides connect cysteine 627–cysteine 654, cysteine 681–cysteine 701, cysteine 744–cysteine 770, cysteine 853–cysteine 879, cysteine 913–cysteine 933, and cysteine 978–cysteine 1004. Asparagine 871 is a glycosylation site (N-linked (GlcNAc...) asparagine). Glutamate 1026, aspartate 1034, and aspartate 1080 together coordinate Ca(2+). Cysteines 1031 and 1058 form a disulfide. The cysteines at positions 1100 and 1126 are disulfide-linked. Asparagine 1119 is a glycosylation site (N-linked (GlcNAc...) asparagine). Glutamate 1148 contributes to the Ca(2+) binding site. Asparagine 1152 carries N-linked (GlcNAc...) asparagine glycosylation. Cysteine 1153 and cysteine 1175 are disulfide-bonded. Aspartate 1156 and aspartate 1197 together coordinate Ca(2+). Cysteines 1216 and 1242 form a disulfide. Ca(2+) is bound by residues glutamate 1264, aspartate 1272, and aspartate 1316. The cysteines at positions 1269 and 1292 are disulfide-linked. Cysteine 1332 and cysteine 1360 are disulfide-bonded. 4 N-linked (GlcNAc...) asparagine glycosylation sites follow: asparagine 1335, asparagine 1359, asparagine 1413, and asparagine 1424. A disulfide bond links cysteine 1439 and cysteine 1465. N-linked (GlcNAc...) asparagine glycosylation is present at asparagine 1491. Intrachain disulfides connect cysteine 1492–cysteine 1513, cysteine 1554–cysteine 1580, cysteine 1607–cysteine 1631, cysteine 1671–cysteine 1697, cysteine 1733–cysteine 1755, cysteine 1792–cysteine 1818, and cysteine 1845–cysteine 1866. A glycan (N-linked (GlcNAc...) asparagine) is linked at asparagine 1694. N-linked (GlcNAc...) asparagine glycans are attached at residues asparagine 1908 and asparagine 2009. Cystine bridges form between cysteine 2019–cysteine 2048 and cysteine 2077–cysteine 2100. 5 consecutive CUB domains span residues 2019–2139 (CGNQ…VRTA), 2140–2256 (CGSE…FRFE), 2262–2383 (DSGR…LSVA), 2385–2512 (CGGS…YTSL), and 2516–2646 (CGET…MNEV). N-linked (GlcNAc...) asparagine glycans are attached at residues asparagine 2092, asparagine 2128, asparagine 2152, and asparagine 2231. Cysteine 2140 and cysteine 2167 are oxidised to a cystine. A disulfide bridge links cysteine 2324 with cysteine 2346. The N-linked (GlcNAc...) asparagine glycan is linked to asparagine 2377. Cysteine 2385 and cysteine 2416 are oxidised to a cystine. Asparagine 2442 carries N-linked (GlcNAc...) asparagine glycosylation. Disulfide bonds link cysteine 2445–cysteine 2474 and cysteine 2516–cysteine 2542. Residues asparagine 2655, asparagine 2671, asparagine 2682, and asparagine 2772 are each glycosylated (N-linked (GlcNAc...) asparagine). Intrachain disulfides connect cysteine 2761-cysteine 2790 and cysteine 2837-cysteine 2859. CUB domains lie at 2761–2895 (CGGV…IKYG), 2898–3010 (CGGK…FERN), 3011–3128 (CGGL…YTSR), 3130–3246 (CGGI…VRVM), 3249–3364 (CDEK…INAI), 3368–3512 (CGSS…VALN), 3522–3615 (LQGR…YLAS), and 3623–3736 (CGGQ…FAGV). N-linked (GlcNAc...) asparagine glycosylation is found at asparagine 2885 and asparagine 2889. 2 disulfides stabilise this stretch: cysteine 2898–cysteine 2921 and cysteine 2949–cysteine 2973. N-linked (GlcNAc...) asparagine glycans are attached at residues asparagine 2960, asparagine 2965, and asparagine 2982. Cysteine 3011 and cysteine 3039 are oxidised to a cystine. 2 N-linked (GlcNAc...) asparagine glycosylation sites follow: asparagine 3040 and asparagine 3074. Intrachain disulfides connect cysteine 3070–cysteine 3092 and cysteine 3130–cysteine 3157. Asparagine 3160 carries an N-linked (GlcNAc...) asparagine glycan. 4 cysteine pairs are disulfide-bonded: cysteine 3184–cysteine 3207, cysteine 3249–cysteine 3278, cysteine 3305–cysteine 3327, and cysteine 3368–cysteine 3402. N-linked (GlcNAc...) asparagine glycosylation is present at asparagine 3256. N-linked (GlcNAc...) asparagine glycosylation occurs at asparagine 3427. A disulfide bridge connects residues cysteine 3430 and cysteine 3475. N-linked (GlcNAc...) asparagine glycosylation is found at asparagine 3543, asparagine 3572, and asparagine 3645. Disulfide bonds link cysteine 3560–cysteine 3579, cysteine 3623–cysteine 3649, and cysteine 3676–cysteine 3699.

As to expression, specifically expressed in nephrocytes.

It is found in the cell membrane. Its function is as follows. Required in the nephrocyte for normal uptake of proteins and elimination of toxins, and for maintenance of endocytic trafficking structures. May function together with Amnionless. The polypeptide is Cubilin homolog (Drosophila melanogaster (Fruit fly)).